The primary structure comprises 103 residues: Large ribosomal subunit protein bL21 (103 aa).

The protein belongs to the bacterial ribosomal protein bL21 family. As to quaternary structure, part of the 50S ribosomal subunit. Contacts protein L20.

Functionally, this protein binds to 23S rRNA in the presence of protein L20. The protein is Large ribosomal subunit protein bL21 of Lactobacillus delbrueckii subsp. bulgaricus (strain ATCC 11842 / DSM 20081 / BCRC 10696 / JCM 1002 / NBRC 13953 / NCIMB 11778 / NCTC 12712 / WDCM 00102 / Lb 14).